Reading from the N-terminus, the 450-residue chain is uncharacterized protein (450 aa).

K283 is modified (N6-(pyridoxal phosphate)lysine).

This sequence belongs to the class-III pyridoxal-phosphate-dependent aminotransferase family. The cofactor is pyridoxal 5'-phosphate.

Functionally, essential for glycerol catabolism. This is an uncharacterized protein from Bacillus subtilis (strain 168).